Here is a 149-residue protein sequence, read N- to C-terminus: Calmodulin-B (149 aa).

Alanine 2 carries the N-acetylalanine modification. EF-hand domains lie at 8–43, 44–79, 81–116, and 117–149; these read EQIA…LGQN, PTEA…KMKE, DSEE…LGEK, and LTDE…MTCK. 14 residues coordinate Ca(2+): aspartate 21, aspartate 23, aspartate 25, threonine 27, glutamate 32, aspartate 57, aspartate 59, asparagine 61, threonine 63, glutamate 68, aspartate 94, aspartate 96, asparagine 98, and glutamate 105. Lysine 116 carries the N6,N6,N6-trimethyllysine modification. Ca(2+)-binding residues include aspartate 130, aspartate 132, aspartate 134, glutamine 136, and glutamate 141.

Belongs to the calmodulin family.

Its function is as follows. Calmodulin mediates the control of a large number of enzymes, ion channels and other proteins by Ca(2+). Among the enzymes to be stimulated by the calmodulin-Ca(2+) complex are a number of protein kinases and phosphatases. The protein is Calmodulin-B of Halocynthia roretzi (Sea squirt).